Consider the following 494-residue polypeptide: UPF0371 protein str1377 (494 aa).

It belongs to the UPF0371 family.

This Streptococcus thermophilus (strain CNRZ 1066) protein is UPF0371 protein str1377.